Here is a 1001-residue protein sequence, read N- to C-terminus: Sarcoplasmic/endoplasmic reticulum calcium ATPase 1 (1001 aa).

Helical transmembrane passes span 49–69, 90–110, 254–273, and 296–313; these read LWEL…LLAA, EPFV…WQER, DEFG…AVWL, and FKIA…GLPA. Ca(2+)-binding residues include valine 304, alanine 305, isoleucine 307, and glutamate 309. The active-site 4-aspartylphosphate intermediate is aspartate 351. Residues aspartate 351 and threonine 353 each coordinate Mg(2+). ATP is bound at residue threonine 353. Threonine 441 is modified (phosphothreonine). Positions 442, 489, 515, and 560 each coordinate ATP. The residue at position 569 (threonine 569) is a Phosphothreonine. Phosphoserine is present on serine 581. ATP is bound by residues threonine 625, glycine 626, aspartate 627, arginine 678, and lysine 684. Mg(2+) is bound at residue aspartate 703. Asparagine 706 contacts ATP. Helical transmembrane passes span 758–777, 788–808, and 829–851; these read KQFI…CIFL, IPVQ…TALG, and ISGW…TVGA. Residues asparagine 768, glutamate 771, asparagine 796, threonine 799, and aspartate 800 each coordinate Ca(2+). Positions 788 to 808 are interaction with PLN; sequence IPVQLLWVNLVTDGLPATALG. An intrachain disulfide couples cysteine 876 to cysteine 888. A run of 3 helical transmembrane segments spans residues 898-917, 931-949, and 965-985; these read TMAL…NSLS, IWLL…LILY, and TQWL…EILK. Glutamate 908 serves as a coordination point for Ca(2+). The interaction with PLN stretch occupies residues 932–943; it reads WLLGSICLSMSL.

The protein belongs to the cation transport ATPase (P-type) (TC 3.A.3) family. Type IIA subfamily. Interacts with sarcolipin (SLN). Interacts with phospholamban (PLN). Interacts with myoregulin (MRLN). Interacts with DWORF. Interacts with VMP1. The cofactor is Mg(2+). In terms of tissue distribution, skeletal muscle, fast twitch muscle (type II) fibers.

The protein localises to the endoplasmic reticulum membrane. The protein resides in the sarcoplasmic reticulum membrane. It carries out the reaction Ca(2+)(in) + ATP + H2O = Ca(2+)(out) + ADP + phosphate + H(+). Inhibited by sarcolipin (SLN) and myoregulin (MRLN). Has also been shown to be reversibly inhibited by phospholamban (PLN) at low calcium concentrations in vitro. Dephosphorylated PLN decreases the apparent affinity of the ATPase for calcium and this inhibition is regulated by the phosphorylation of PLN in vitro. Enhanced by DWORF; DWORF increases activity by displacing sarcolipin (SLN), phospholamban (PLN) and myoregulin (MRLN). Functionally, key regulator of striated muscle performance by acting as the major Ca(2+) ATPase responsible for the reuptake of cytosolic Ca(2+) into the sarcoplasmic reticulum. Catalyzes the hydrolysis of ATP coupled with the translocation of calcium from the cytosol to the sarcoplasmic reticulum lumen. Contributes to calcium sequestration involved in muscular excitation/contraction. The protein is Sarcoplasmic/endoplasmic reticulum calcium ATPase 1 of Homo sapiens (Human).